We begin with the raw amino-acid sequence, 1142 residues long: Auxin response factor 5 (1142 aa).

Residues 148-250 constitute a DNA-binding region (TF-B3); sequence FCKTLTASDT…QLLLGIRRAN (103 aa). The 85-residue stretch at 1009–1093 folds into the PB1 domain; it reads RTFTKVYKRG…RCIRILSPQE (85 aa). The disordered stretch occupies residues 1114-1142; sequence SSSDGVNGWRPRCDQNPGNPSIGPYDQFE.

It belongs to the ARF family. Homodimers and heterodimers. As to expression, expressed in roots, culms, leaves and young panicles.

It is found in the nucleus. In terms of biological role, auxin response factors (ARFs) are transcriptional factors that bind specifically to the DNA sequence 5'-TGTCTC-3' found in the auxin-responsive promoter elements (AuxREs). This Oryza sativa subsp. japonica (Rice) protein is Auxin response factor 5 (ARF5).